The primary structure comprises 102 residues: NADH-quinone oxidoreductase subunit K (102 aa).

3 helical membrane-spanning segments follow: residues 6–26 (MEHG…GLLI), 30–50 (LLYI…AFVV), and 65–85 (ILVI…LLLL).

This sequence belongs to the complex I subunit 4L family. In terms of assembly, NDH-1 is composed of 13 different subunits. Subunits NuoA, H, J, K, L, M, N constitute the membrane sector of the complex.

Its subcellular location is the cell inner membrane. The enzyme catalyses a quinone + NADH + 5 H(+)(in) = a quinol + NAD(+) + 4 H(+)(out). NDH-1 shuttles electrons from NADH, via FMN and iron-sulfur (Fe-S) centers, to quinones in the respiratory chain. The immediate electron acceptor for the enzyme in this species is believed to be ubiquinone. Couples the redox reaction to proton translocation (for every two electrons transferred, four hydrogen ions are translocated across the cytoplasmic membrane), and thus conserves the redox energy in a proton gradient. In Shewanella oneidensis (strain ATCC 700550 / JCM 31522 / CIP 106686 / LMG 19005 / NCIMB 14063 / MR-1), this protein is NADH-quinone oxidoreductase subunit K.